Reading from the N-terminus, the 121-residue chain is Large ribosomal subunit protein bL20 (121 aa).

The protein belongs to the bacterial ribosomal protein bL20 family.

In terms of biological role, binds directly to 23S ribosomal RNA and is necessary for the in vitro assembly process of the 50S ribosomal subunit. It is not involved in the protein synthesizing functions of that subunit. This Orientia tsutsugamushi (strain Boryong) (Rickettsia tsutsugamushi) protein is Large ribosomal subunit protein bL20.